Here is a 599-residue protein sequence, read N- to C-terminus: Sulfite reductase [NADPH] flavoprotein alpha-component (599 aa).

The region spanning 64-202 is the Flavodoxin-like domain; the sequence is ITIISASQTG…AASEWRARVV (139 aa). FMN is bound by residues 70–75, 117–120, and 153–162; these read SQTGNA, STQG, and LGDSSYEFFC. An FAD-binding FR-type domain is found at 234–448; it reads DAPLVASLSV…IEHNDNFRLP (215 aa). FAD is bound by residues Thr-322, Ala-356, 386-389, 404-406, Tyr-410, and 419-422; these read RLYS, TVG, and GGAS. Residues 519–520, 525–529, and Asp-561 each bind NADP(+); these read SR and KVYVQ. Tyr-599 contacts FAD.

Belongs to the NADPH-dependent sulphite reductase flavoprotein subunit CysJ family. This sequence in the N-terminal section; belongs to the flavodoxin family. It in the C-terminal section; belongs to the flavoprotein pyridine nucleotide cytochrome reductase family. As to quaternary structure, alpha(8)-beta(8). The alpha component is a flavoprotein, the beta component is a hemoprotein. It depends on FAD as a cofactor. FMN is required as a cofactor.

It carries out the reaction hydrogen sulfide + 3 NADP(+) + 3 H2O = sulfite + 3 NADPH + 4 H(+). The protein operates within sulfur metabolism; hydrogen sulfide biosynthesis; hydrogen sulfide from sulfite (NADPH route): step 1/1. Functionally, component of the sulfite reductase complex that catalyzes the 6-electron reduction of sulfite to sulfide. This is one of several activities required for the biosynthesis of L-cysteine from sulfate. The flavoprotein component catalyzes the electron flow from NADPH -&gt; FAD -&gt; FMN to the hemoprotein component. The protein is Sulfite reductase [NADPH] flavoprotein alpha-component of Escherichia coli (strain K12).